The sequence spans 435 residues: MNAEDVKGFFASRESLDMEQYLVLDYYLESVGDIETALAHFCSEQSTAQWKRVGVDEDFRLVHAAKVIDYEVIEELEQLSYPVKHSETGKIHACRVTIAHPHCNFGPKIPNLLTAVCGEGTYFTPGVPVVKLMDIHFPDTYLADFEGPKFGIEGLRDILNAHGRPIFFGVVKPNIGLSPGEFAEIAYQSWLGGLDIAKDDEMLADVTWSSIEERAAHLGKARRKAEAETGEPKIYLANITDEVDSLMEKHDVAVRNGANALLINALPVGLSAVRMLSNYTQVPLIGHFPFIASFSRMEKYGIHSKVMTKLQRLAGLDAVIMPGFGDRMMTPEEEVLENVIECTKPMGRIKPCLPVPGGSDSALTLQTVYEKVGNVDFGFVPGRGVFGHPMGPKAGAKSIRQAWEAIEQGISIETWAETHPELQAMVDQSLLKKQD.

The Mg(2+) site is built by K198, D200, and E201. K198 carries the post-translational modification N6-carboxylysine.

Belongs to the RuBisCO large chain family. Type IV subfamily. In terms of assembly, homodimer. It depends on Mg(2+) as a cofactor.

May be involved in sulfur metabolism and oxidative stress response. Does not show RuBisCO activity. This Chlorobaculum tepidum (strain ATCC 49652 / DSM 12025 / NBRC 103806 / TLS) (Chlorobium tepidum) protein is Ribulose bisphosphate carboxylase-like protein.